A 355-amino-acid polypeptide reads, in one-letter code: UDP-3-O-acylglucosamine N-acyltransferase (355 aa).

His246 (proton acceptor) is an active-site residue.

The protein belongs to the transferase hexapeptide repeat family. LpxD subfamily. In terms of assembly, homotrimer.

It carries out the reaction a UDP-3-O-[(3R)-3-hydroxyacyl]-alpha-D-glucosamine + a (3R)-hydroxyacyl-[ACP] = a UDP-2-N,3-O-bis[(3R)-3-hydroxyacyl]-alpha-D-glucosamine + holo-[ACP] + H(+). Its pathway is bacterial outer membrane biogenesis; LPS lipid A biosynthesis. In terms of biological role, catalyzes the N-acylation of UDP-3-O-acylglucosamine using 3-hydroxyacyl-ACP as the acyl donor. Is involved in the biosynthesis of lipid A, a phosphorylated glycolipid that anchors the lipopolysaccharide to the outer membrane of the cell. This chain is UDP-3-O-acylglucosamine N-acyltransferase, found in Polaromonas naphthalenivorans (strain CJ2).